The primary structure comprises 230 residues: 3,4-dihydroxy-2-butanone 4-phosphate synthase (230 aa).

Residues 42 to 43 (RE), aspartate 47, 155 to 159 (RRGHT), and glutamate 179 each bind D-ribulose 5-phosphate. Glutamate 43 lines the Mg(2+) pocket. Residue histidine 158 coordinates Mg(2+).

This sequence belongs to the DHBP synthase family. As to quaternary structure, homodimer. Mg(2+) serves as cofactor. It depends on Mn(2+) as a cofactor.

It catalyses the reaction D-ribulose 5-phosphate = (2S)-2-hydroxy-3-oxobutyl phosphate + formate + H(+). It participates in cofactor biosynthesis; riboflavin biosynthesis; 2-hydroxy-3-oxobutyl phosphate from D-ribulose 5-phosphate: step 1/1. In terms of biological role, catalyzes the conversion of D-ribulose 5-phosphate to formate and 3,4-dihydroxy-2-butanone 4-phosphate. The polypeptide is 3,4-dihydroxy-2-butanone 4-phosphate synthase (Bordetella pertussis (strain Tohama I / ATCC BAA-589 / NCTC 13251)).